The following is a 110-amino-acid chain: uncharacterized protein (110 aa).

Positions 1-26 (MIRNVLLAFMICSGMTLLGGCSSVMS) are cleaved as a signal peptide. The tract at residues 87-110 (RVEKSEANAQATNAVIPPARMPDN) is disordered.

It to E.coli YceK.

This is an uncharacterized protein from Escherichia coli (strain K12).